The chain runs to 219 residues: Small ribosomal subunit protein uS3 (219 aa).

One can recognise a KH type-2 domain in the interval 38-106 (IRKYINTKLA…KVHINIVEIK (69 aa)).

It belongs to the universal ribosomal protein uS3 family. As to quaternary structure, part of the 30S ribosomal subunit. Forms a tight complex with proteins S10 and S14.

Binds the lower part of the 30S subunit head. Binds mRNA in the 70S ribosome, positioning it for translation. This Latilactobacillus sakei subsp. sakei (strain 23K) (Lactobacillus sakei subsp. sakei) protein is Small ribosomal subunit protein uS3.